The chain runs to 454 residues: Bifunctional protein GlmU (454 aa).

A pyrophosphorylase region spans residues 1–228 (MTLPLHVVIL…PQDVEGANDP (228 aa)). UDP-N-acetyl-alpha-D-glucosamine-binding positions include 10–13 (LAAG), Lys-24, Gln-76, 81–82 (GT), 103–105 (YGD), Gly-138, Glu-153, Asn-168, and Asn-226. Asp-105 contacts Mg(2+). Position 226 (Asn-226) interacts with Mg(2+). The segment at 229–249 (WQLAQLERAWQLRAARALCLQ) is linker. An N-acetyltransferase region spans residues 250 to 454 (GVRMADPARV…IEGWERPKKK (205 aa)). Residues Arg-332 and Lys-350 each coordinate UDP-N-acetyl-alpha-D-glucosamine. The active-site Proton acceptor is His-362. Residues Tyr-365 and Asn-376 each coordinate UDP-N-acetyl-alpha-D-glucosamine. Acetyl-CoA-binding positions include Ala-379, 385-386 (NY), Ser-404, Ala-422, and Arg-439.

This sequence in the N-terminal section; belongs to the N-acetylglucosamine-1-phosphate uridyltransferase family. In the C-terminal section; belongs to the transferase hexapeptide repeat family. Homotrimer. Mg(2+) is required as a cofactor.

The protein localises to the cytoplasm. The enzyme catalyses alpha-D-glucosamine 1-phosphate + acetyl-CoA = N-acetyl-alpha-D-glucosamine 1-phosphate + CoA + H(+). It carries out the reaction N-acetyl-alpha-D-glucosamine 1-phosphate + UTP + H(+) = UDP-N-acetyl-alpha-D-glucosamine + diphosphate. It participates in nucleotide-sugar biosynthesis; UDP-N-acetyl-alpha-D-glucosamine biosynthesis; N-acetyl-alpha-D-glucosamine 1-phosphate from alpha-D-glucosamine 6-phosphate (route II): step 2/2. Its pathway is nucleotide-sugar biosynthesis; UDP-N-acetyl-alpha-D-glucosamine biosynthesis; UDP-N-acetyl-alpha-D-glucosamine from N-acetyl-alpha-D-glucosamine 1-phosphate: step 1/1. The protein operates within bacterial outer membrane biogenesis; LPS lipid A biosynthesis. Catalyzes the last two sequential reactions in the de novo biosynthetic pathway for UDP-N-acetylglucosamine (UDP-GlcNAc). The C-terminal domain catalyzes the transfer of acetyl group from acetyl coenzyme A to glucosamine-1-phosphate (GlcN-1-P) to produce N-acetylglucosamine-1-phosphate (GlcNAc-1-P), which is converted into UDP-GlcNAc by the transfer of uridine 5-monophosphate (from uridine 5-triphosphate), a reaction catalyzed by the N-terminal domain. The polypeptide is Bifunctional protein GlmU (Xanthomonas campestris pv. campestris (strain 8004)).